The sequence spans 669 residues: DNA ligase (669 aa).

NAD(+)-binding positions include 34–38, 83–84, and glutamate 117; these read DAEYD and SL. The active-site N6-AMP-lysine intermediate is lysine 119. NAD(+) is bound by residues arginine 140, glutamate 177, lysine 293, and lysine 317. Positions 411, 414, 429, and 434 each coordinate Zn(2+). One can recognise a BRCT domain in the interval 591–669; sequence RLGGRFTGKT…EDEFLKMLEG (79 aa).

Belongs to the NAD-dependent DNA ligase family. LigA subfamily. Requires Mg(2+) as cofactor. It depends on Mn(2+) as a cofactor.

The catalysed reaction is NAD(+) + (deoxyribonucleotide)n-3'-hydroxyl + 5'-phospho-(deoxyribonucleotide)m = (deoxyribonucleotide)n+m + AMP + beta-nicotinamide D-nucleotide.. In terms of biological role, DNA ligase that catalyzes the formation of phosphodiester linkages between 5'-phosphoryl and 3'-hydroxyl groups in double-stranded DNA using NAD as a coenzyme and as the energy source for the reaction. It is essential for DNA replication and repair of damaged DNA. This is DNA ligase from Geotalea daltonii (strain DSM 22248 / JCM 15807 / FRC-32) (Geobacter daltonii).